The primary structure comprises 795 residues: Multiple C2 domain and transmembrane region protein 12 (795 aa).

C2 domains are found at residues 24-142 (RNPR…PQWY), 180-298 (VCAS…SAPA), and 341-463 (YSSD…TCSY). Ca(2+)-binding residues include asparagine 57, aspartate 109, and asparagine 113. Helical transmembrane passes span 590–610 (CTPK…EYYI), 612–632 (WLVT…VILL), 730–750 (FVLI…CLGW), and 752–772 (LHVR…LPWF).

Belongs to the MCTP family. It depends on Ca(2+) as a cofactor. As to expression, expressed in root vascular tissues and meristems. Observed in flowers.

The protein localises to the endoplasmic reticulum membrane. In terms of biological role, may function as a signaling molecule by regulating the trafficking of other regulators. The polypeptide is Multiple C2 domain and transmembrane region protein 12 (Arabidopsis thaliana (Mouse-ear cress)).